The following is a 152-amino-acid chain: UPF0225 protein Ent638_2310 (152 aa).

Belongs to the UPF0225 family.

The chain is UPF0225 protein Ent638_2310 from Enterobacter sp. (strain 638).